A 163-amino-acid chain; its full sequence is Xanthine-guanine phosphoribosyltransferase (163 aa).

5-phospho-alpha-D-ribose 1-diphosphate-binding positions include 43-44 (RG) and 95-103 (DDLVDTGGT). Mg(2+) is bound at residue aspartate 96. Guanine contacts are provided by aspartate 99 and isoleucine 142. Residues aspartate 99 and isoleucine 142 each contribute to the xanthine site. GMP is bound by residues 99-103 (DTGGT) and 141-142 (WI).

It belongs to the purine/pyrimidine phosphoribosyltransferase family. XGPT subfamily. As to quaternary structure, homotetramer. Mg(2+) is required as a cofactor.

Its subcellular location is the cell inner membrane. It catalyses the reaction GMP + diphosphate = guanine + 5-phospho-alpha-D-ribose 1-diphosphate. The enzyme catalyses XMP + diphosphate = xanthine + 5-phospho-alpha-D-ribose 1-diphosphate. The catalysed reaction is IMP + diphosphate = hypoxanthine + 5-phospho-alpha-D-ribose 1-diphosphate. It participates in purine metabolism; GMP biosynthesis via salvage pathway; GMP from guanine: step 1/1. It functions in the pathway purine metabolism; XMP biosynthesis via salvage pathway; XMP from xanthine: step 1/1. In terms of biological role, purine salvage pathway enzyme that catalyzes the transfer of the ribosyl-5-phosphate group from 5-phospho-alpha-D-ribose 1-diphosphate (PRPP) to the N9 position of the 6-oxopurines guanine and xanthine to form the corresponding ribonucleotides GMP (guanosine 5'-monophosphate) and XMP (xanthosine 5'-monophosphate), with the release of PPi. To a lesser extent, also acts on hypoxanthine. This chain is Xanthine-guanine phosphoribosyltransferase, found in Nitratidesulfovibrio vulgaris (strain DP4) (Desulfovibrio vulgaris).